The chain runs to 394 residues: Mannosyl-3-phosphoglycerate synthase (394 aa).

The protein belongs to the glycosyltransferase 2 family. The cofactor is Mg(2+).

It localises to the cytoplasm. The enzyme catalyses (2R)-3-phosphoglycerate + GDP-alpha-D-mannose = 2-O-(alpha-D-mannosyl)-3-phosphoglycerate + GDP + H(+). The protein operates within carbohydrate biosynthesis; 2-(alpha-D-mannosyl)-D-glycerate biosynthesis; 2-(alpha-D-mannosyl)-D-glycerate from GDP-alpha-D-mannose (MPG route): step 1/2. Its function is as follows. Transfers a mannosyl group from GDP-mannose to phosphoglycerate to form mannosyl-3-phosphoglycerate (MPG). The enzyme is absolutely specific for GDP-mannose and 3-phosphoglycerate, and transfers the mannosyl group with retention of configuration. In Pyrococcus horikoshii (strain ATCC 700860 / DSM 12428 / JCM 9974 / NBRC 100139 / OT-3), this protein is Mannosyl-3-phosphoglycerate synthase (mngA).